The following is a 430-amino-acid chain: Serine hydroxymethyltransferase (430 aa).

Residue 120–122 (GHI) participates in (6S)-5,6,7,8-tetrahydrofolate binding. An N6-(pyridoxal phosphate)lysine modification is found at K226.

This sequence belongs to the SHMT family. As to quaternary structure, homodimer. Pyridoxal 5'-phosphate serves as cofactor.

It is found in the cytoplasm. The protein operates within amino-acid biosynthesis; glycine biosynthesis; glycine from L-serine: step 1/1. In terms of biological role, catalyzes the reversible interconversion of serine and glycine with a modified folate serving as the one-carbon carrier. Also exhibits a pteridine-independent aldolase activity toward beta-hydroxyamino acids, producing glycine and aldehydes, via a retro-aldol mechanism. This chain is Serine hydroxymethyltransferase, found in Pyrobaculum islandicum (strain DSM 4184 / JCM 9189 / GEO3).